We begin with the raw amino-acid sequence, 147 residues long: Large ribosomal subunit protein uL13 (147 aa).

It belongs to the universal ribosomal protein uL13 family. As to quaternary structure, part of the 50S ribosomal subunit.

Its function is as follows. This protein is one of the early assembly proteins of the 50S ribosomal subunit, although it is not seen to bind rRNA by itself. It is important during the early stages of 50S assembly. The sequence is that of Large ribosomal subunit protein uL13 from Nocardioides sp. (strain ATCC BAA-499 / JS614).